The following is a 227-amino-acid chain: Izumo sperm-egg fusion protein 4 (227 aa).

A signal peptide spans 1–24 (MFGQGRLGQAMALLLFLGMTAALA). Asn153 and Asn214 each carry an N-linked (GlcNAc...) asparagine glycan.

It belongs to the Izumo family.

It is found in the secreted. This is Izumo sperm-egg fusion protein 4 (Izumo4) from Mus musculus (Mouse).